A 228-amino-acid chain; its full sequence is 3,4-dihydroxy-2-butanone 4-phosphate synthase (228 aa).

Residues 37–38 (RE), D42, 150–154 (RRGHT), and E174 contribute to the D-ribulose 5-phosphate site. E38 serves as a coordination point for Mg(2+). H153 lines the Mg(2+) pocket.

This sequence belongs to the DHBP synthase family. Homodimer. It depends on Mg(2+) as a cofactor. Requires Mn(2+) as cofactor.

The catalysed reaction is D-ribulose 5-phosphate = (2S)-2-hydroxy-3-oxobutyl phosphate + formate + H(+). Its pathway is cofactor biosynthesis; riboflavin biosynthesis; 2-hydroxy-3-oxobutyl phosphate from D-ribulose 5-phosphate: step 1/1. In terms of biological role, catalyzes the conversion of D-ribulose 5-phosphate to formate and 3,4-dihydroxy-2-butanone 4-phosphate. In Photobacterium profundum (strain SS9), this protein is 3,4-dihydroxy-2-butanone 4-phosphate synthase.